The chain runs to 291 residues: 4-hydroxy-tetrahydrodipicolinate synthase (291 aa).

Threonine 44 provides a ligand contact to pyruvate. Tyrosine 132 functions as the Proton donor/acceptor in the catalytic mechanism. Residue lysine 160 is the Schiff-base intermediate with substrate of the active site. Valine 202 is a binding site for pyruvate.

It belongs to the DapA family. Homotetramer; dimer of dimers.

It localises to the cytoplasm. The catalysed reaction is L-aspartate 4-semialdehyde + pyruvate = (2S,4S)-4-hydroxy-2,3,4,5-tetrahydrodipicolinate + H2O + H(+). The protein operates within amino-acid biosynthesis; L-lysine biosynthesis via DAP pathway; (S)-tetrahydrodipicolinate from L-aspartate: step 3/4. Functionally, catalyzes the condensation of (S)-aspartate-beta-semialdehyde [(S)-ASA] and pyruvate to 4-hydroxy-tetrahydrodipicolinate (HTPA). The polypeptide is 4-hydroxy-tetrahydrodipicolinate synthase (Clostridium perfringens (strain 13 / Type A)).